An 89-amino-acid chain; its full sequence is Small ribosomal subunit protein uS15 (89 aa).

Belongs to the universal ribosomal protein uS15 family. Part of the 30S ribosomal subunit. Forms a bridge to the 50S subunit in the 70S ribosome, contacting the 23S rRNA.

Functionally, one of the primary rRNA binding proteins, it binds directly to 16S rRNA where it helps nucleate assembly of the platform of the 30S subunit by binding and bridging several RNA helices of the 16S rRNA. Forms an intersubunit bridge (bridge B4) with the 23S rRNA of the 50S subunit in the ribosome. In Ruegeria sp. (strain TM1040) (Silicibacter sp.), this protein is Small ribosomal subunit protein uS15.